The sequence spans 266 residues: Ribonuclease 3 (266 aa).

The interval 1-35 is disordered; it reads MMDESADIKPVPTSEDVAAPSGTEPVAPAPKKKRA. In terms of domain architecture, RNase III spans 43-171; it reads MAAIEQRLGH…VIGAVYLDGG (129 aa). Residue Glu84 coordinates Mg(2+). Residue Asp88 is part of the active site. Residues Asp157 and Glu160 each coordinate Mg(2+). Glu160 is an active-site residue. The 70-residue stretch at 196-265 folds into the DRBM domain; sequence DPKTVLQEWA…ASAMIVREGV (70 aa).

It belongs to the ribonuclease III family. As to quaternary structure, homodimer. Mg(2+) is required as a cofactor.

It localises to the cytoplasm. The enzyme catalyses Endonucleolytic cleavage to 5'-phosphomonoester.. Digests double-stranded RNA. Involved in the processing of primary rRNA transcript to yield the immediate precursors to the large and small rRNAs (23S and 16S). Processes some mRNAs, and tRNAs when they are encoded in the rRNA operon. Processes pre-crRNA and tracrRNA of type II CRISPR loci if present in the organism. The chain is Ribonuclease 3 from Nitrobacter winogradskyi (strain ATCC 25391 / DSM 10237 / CIP 104748 / NCIMB 11846 / Nb-255).